The sequence spans 309 residues: MPKVRTKDLIEQFHLELISGEEGIHRPIDTSDLSRPGIEMAGFFTYYPADRVQLLGKTELTFFDTLTSDQKQERMKALCTEETPCIIVTRNQDVPDELLQASRESGMPLLRSSQTTTRLSSRLTNYLEGKLAPTTAVHGVLVDIYGVGVLITGQSGVGKSETALELVKRGHRLVADDSVEIRQEDEDMLVGSSPDLIEHLLEIRGLGIINVMTLFGAGAVRNYKRITLVINLEIWDQKKNYDRLGLDEEKMKIIDTELTKITLPVRPGRNLAVIIEVAAMNFRLKRMGVNAAQQFSERLMSAIELGNQE.

Residues H138 and K159 contribute to the active site. An ATP-binding site is contributed by 153–160 (GQSGVGKS). S160 contacts Mg(2+). D177 functions as the Proton acceptor; for phosphorylation activity. Proton donor; for dephosphorylation activity in the catalytic mechanism. Positions 201–210 (LEIRGLGIIN) are important for the catalytic mechanism of both phosphorylation and dephosphorylation. E202 is a Mg(2+) binding site. The active site involves R243. Residues 264–269 (PVRPGR) form an important for the catalytic mechanism of dephosphorylation region.

Belongs to the HPrK/P family. Homohexamer. Mg(2+) serves as cofactor.

The enzyme catalyses [HPr protein]-L-serine + ATP = [HPr protein]-O-phospho-L-serine + ADP + H(+). The catalysed reaction is [HPr protein]-O-phospho-L-serine + phosphate + H(+) = [HPr protein]-L-serine + diphosphate. Its function is as follows. Catalyzes the ATP- as well as the pyrophosphate-dependent phosphorylation of a specific serine residue in HPr, a phosphocarrier protein of the phosphoenolpyruvate-dependent sugar phosphotransferase system (PTS). HprK/P also catalyzes the pyrophosphate-producing, inorganic phosphate-dependent dephosphorylation (phosphorolysis) of seryl-phosphorylated HPr (P-Ser-HPr). The two antagonistic activities of HprK/P are regulated by several intracellular metabolites, which change their concentration in response to the absence or presence of rapidly metabolisable carbon sources (glucose, fructose, etc.) in the growth medium. Also phosphorylates/dephosphorylates the HPr-like catabolite repression protein crh on a specific serine residue. Therefore, by controlling the phosphorylation state of HPr and crh, HPrK/P is a sensor enzyme that plays a major role in the regulation of carbon metabolism and sugar transport: it mediates carbon catabolite repression (CCR), and regulates PTS-catalyzed carbohydrate uptake and inducer exclusion. The protein is HPr kinase/phosphorylase of Bacillus cereus (strain AH820).